A 363-amino-acid polypeptide reads, in one-letter code: Phosphoserine aminotransferase (363 aa).

Arginine 42 contributes to the L-glutamate binding site. Pyridoxal 5'-phosphate contacts are provided by residues 76 to 77, tryptophan 102, threonine 156, aspartate 175, and glutamine 198; that span reads GR. Position 199 is an N6-(pyridoxal phosphate)lysine (lysine 199). 240–241 contacts pyridoxal 5'-phosphate; the sequence is NT.

Belongs to the class-V pyridoxal-phosphate-dependent aminotransferase family. SerC subfamily. Homodimer. It depends on pyridoxal 5'-phosphate as a cofactor.

It is found in the cytoplasm. It catalyses the reaction O-phospho-L-serine + 2-oxoglutarate = 3-phosphooxypyruvate + L-glutamate. The catalysed reaction is 4-(phosphooxy)-L-threonine + 2-oxoglutarate = (R)-3-hydroxy-2-oxo-4-phosphooxybutanoate + L-glutamate. Its pathway is amino-acid biosynthesis; L-serine biosynthesis; L-serine from 3-phospho-D-glycerate: step 2/3. It participates in cofactor biosynthesis; pyridoxine 5'-phosphate biosynthesis; pyridoxine 5'-phosphate from D-erythrose 4-phosphate: step 3/5. Catalyzes the reversible conversion of 3-phosphohydroxypyruvate to phosphoserine and of 3-hydroxy-2-oxo-4-phosphonooxybutanoate to phosphohydroxythreonine. The polypeptide is Phosphoserine aminotransferase (Shewanella piezotolerans (strain WP3 / JCM 13877)).